The primary structure comprises 365 residues: Nudix hydrolase 24, chloroplastic (365 aa).

A chloroplast-targeting transit peptide spans 1 to 30 (MASAFCSLCPTPTSLFSSHALIPTLQWRSS). The 142-residue stretch at 196-337 (GYAIHVNGYV…KDSCSLVIID (142 aa)) folds into the Nudix hydrolase domain. Residues 235 to 256 (GGLPHGISVCENLVKECEEEAG) carry the Nudix box motif. Mg(2+)-binding residues include E250 and E254.

Belongs to the Nudix hydrolase family. The cofactor is Mg(2+). Requires Mn(2+) as cofactor. Expressed in leaves.

It is found in the plastid. The protein localises to the chloroplast. Functionally, probably mediates the hydrolysis of some nucleoside diphosphate derivatives. The sequence is that of Nudix hydrolase 24, chloroplastic (NUDT24) from Arabidopsis thaliana (Mouse-ear cress).